Here is a 150-residue protein sequence, read N- to C-terminus: 3-hydroxyacyl-[acyl-carrier-protein] dehydratase FabZ (150 aa).

His51 is an active-site residue.

This sequence belongs to the thioester dehydratase family. FabZ subfamily.

The protein localises to the cytoplasm. It carries out the reaction a (3R)-hydroxyacyl-[ACP] = a (2E)-enoyl-[ACP] + H2O. Involved in unsaturated fatty acids biosynthesis. Catalyzes the dehydration of short chain beta-hydroxyacyl-ACPs and long chain saturated and unsaturated beta-hydroxyacyl-ACPs. This is 3-hydroxyacyl-[acyl-carrier-protein] dehydratase FabZ from Legionella pneumophila (strain Paris).